Consider the following 356-residue polypeptide: Protein-glutamate methylesterase/protein-glutamine glutaminase 4 (356 aa).

In terms of domain architecture, Response regulatory spans 15–132; that stretch reads RVLVVDDSAV…SVGEMTADLV (118 aa). D66 bears the 4-aspartylphosphate mark. One can recognise a CheB-type methylesterase domain in the interval 162-348; the sequence is ARTTLQVVAI…PLDRIAPEIL (187 aa). Catalysis depends on residues S174, H200, and D296.

Belongs to the CheB family. In terms of processing, phosphorylated by CheA. Phosphorylation of the N-terminal regulatory domain activates the methylesterase activity.

The protein resides in the cytoplasm. The catalysed reaction is [protein]-L-glutamate 5-O-methyl ester + H2O = L-glutamyl-[protein] + methanol + H(+). The enzyme catalyses L-glutaminyl-[protein] + H2O = L-glutamyl-[protein] + NH4(+). Involved in chemotaxis. Part of a chemotaxis signal transduction system that modulates chemotaxis in response to various stimuli. Catalyzes the demethylation of specific methylglutamate residues introduced into the chemoreceptors (methyl-accepting chemotaxis proteins or MCP) by CheR. Also mediates the irreversible deamidation of specific glutamine residues to glutamic acid. The polypeptide is Protein-glutamate methylesterase/protein-glutamine glutaminase 4 (Anaeromyxobacter dehalogenans (strain 2CP-C)).